The chain runs to 219 residues: Phosphatidylserine decarboxylase proenzyme (219 aa).

The active-site Schiff-base intermediate with substrate; via pyruvic acid is Ser188. Residue Ser188 is modified to Pyruvic acid (Ser); by autocatalysis.

Belongs to the phosphatidylserine decarboxylase family. PSD-A subfamily. As to quaternary structure, heterodimer of a large membrane-associated beta subunit and a small pyruvoyl-containing alpha subunit. Requires pyruvate as cofactor. Is synthesized initially as an inactive proenzyme. Formation of the active enzyme involves a self-maturation process in which the active site pyruvoyl group is generated from an internal serine residue via an autocatalytic post-translational modification. Two non-identical subunits are generated from the proenzyme in this reaction, and the pyruvate is formed at the N-terminus of the alpha chain, which is derived from the carboxyl end of the proenzyme. The post-translation cleavage follows an unusual pathway, termed non-hydrolytic serinolysis, in which the side chain hydroxyl group of the serine supplies its oxygen atom to form the C-terminus of the beta chain, while the remainder of the serine residue undergoes an oxidative deamination to produce ammonia and the pyruvoyl prosthetic group on the alpha chain.

It localises to the cell membrane. The enzyme catalyses a 1,2-diacyl-sn-glycero-3-phospho-L-serine + H(+) = a 1,2-diacyl-sn-glycero-3-phosphoethanolamine + CO2. The protein operates within phospholipid metabolism; phosphatidylethanolamine biosynthesis; phosphatidylethanolamine from CDP-diacylglycerol: step 2/2. Catalyzes the formation of phosphatidylethanolamine (PtdEtn) from phosphatidylserine (PtdSer). This Geobacter sp. (strain M21) protein is Phosphatidylserine decarboxylase proenzyme.